The chain runs to 216 residues: MTHLSKEAVIVRSALEAKGLETPMQHSSLSAQEKKQQIEQHMTSIMTLLGLDLADDSLAETPHRIAKMYVDEIFSGLDYGSFPKITLIENKMGTDEMIKVQDIGLTSTCEHHFVTIDGKATVAYIPKDKIIGLSKINRIVNFFAKRPQVQERLTQQILVALQVLLGTDNVAITVTATHYCVKSRGVMDASSQTTTTALGGVFKSSAATRHEFLSRA.

Zn(2+) contacts are provided by C109, H112, and C180.

It belongs to the GTP cyclohydrolase I family. As to quaternary structure, homomer.

The catalysed reaction is GTP + H2O = 7,8-dihydroneopterin 3'-triphosphate + formate + H(+). The protein operates within cofactor biosynthesis; 7,8-dihydroneopterin triphosphate biosynthesis; 7,8-dihydroneopterin triphosphate from GTP: step 1/1. In Tolumonas auensis (strain DSM 9187 / NBRC 110442 / TA 4), this protein is GTP cyclohydrolase 1.